The sequence spans 639 residues: 3D-(3,5/4)-trihydroxycyclohexane-1,2-dione hydrolase (639 aa).

E62 lines the thiamine diphosphate pocket. The segment at 438–518 is thiamine pyrophosphate binding; sequence SLPGDLQRMW…INILLFDNCG (81 aa). Mg(2+) is bound by residues D489 and N516.

Belongs to the TPP enzyme family. It depends on Mg(2+) as a cofactor. Thiamine diphosphate serves as cofactor.

The catalysed reaction is 3D-3,5/4-trihydroxycyclohexane-1,2-dione + H2O = 5-deoxy-D-glucuronate + H(+). The protein operates within polyol metabolism; myo-inositol degradation into acetyl-CoA; acetyl-CoA from myo-inositol: step 3/7. Functionally, involved in the cleavage of the C1-C2 bond of 3D-(3,5/4)-trihydroxycyclohexane-1,2-dione (THcHDO) to yield 5-deoxy-glucuronate (5DG). The polypeptide is 3D-(3,5/4)-trihydroxycyclohexane-1,2-dione hydrolase (Clostridium perfringens (strain 13 / Type A)).